The following is a 399-amino-acid chain: 1-deoxy-D-xylulose 5-phosphate reductoisomerase (399 aa).

NADPH contacts are provided by threonine 11, glycine 12, serine 13, isoleucine 14, glycine 37, asparagine 39, and asparagine 125. Lysine 126 contacts 1-deoxy-D-xylulose 5-phosphate. NADPH is bound at residue glutamate 127. Aspartate 151 provides a ligand contact to Mn(2+). The 1-deoxy-D-xylulose 5-phosphate site is built by serine 152, glutamate 153, serine 177, and histidine 200. Glutamate 153 is a Mn(2+) binding site. Glycine 206 contributes to the NADPH binding site. Residues serine 213, asparagine 218, lysine 219, and glutamate 222 each coordinate 1-deoxy-D-xylulose 5-phosphate. Glutamate 222 contacts Mn(2+).

It belongs to the DXR family. Mg(2+) is required as a cofactor. Mn(2+) serves as cofactor.

The enzyme catalyses 2-C-methyl-D-erythritol 4-phosphate + NADP(+) = 1-deoxy-D-xylulose 5-phosphate + NADPH + H(+). It participates in isoprenoid biosynthesis; isopentenyl diphosphate biosynthesis via DXP pathway; isopentenyl diphosphate from 1-deoxy-D-xylulose 5-phosphate: step 1/6. Catalyzes the NADPH-dependent rearrangement and reduction of 1-deoxy-D-xylulose-5-phosphate (DXP) to 2-C-methyl-D-erythritol 4-phosphate (MEP). The polypeptide is 1-deoxy-D-xylulose 5-phosphate reductoisomerase (Nostoc sp. (strain PCC 7120 / SAG 25.82 / UTEX 2576)).